A 247-amino-acid chain; its full sequence is Carboxy-S-adenosyl-L-methionine synthase (247 aa).

S-adenosyl-L-methionine is bound by residues Tyr39, Asp89–Asn90, Asp117–Ile118, Asn132, and Arg199.

It belongs to the class I-like SAM-binding methyltransferase superfamily. Cx-SAM synthase family. As to quaternary structure, homodimer.

The enzyme catalyses prephenate + S-adenosyl-L-methionine = carboxy-S-adenosyl-L-methionine + 3-phenylpyruvate + H2O. Functionally, catalyzes the conversion of S-adenosyl-L-methionine (SAM) to carboxy-S-adenosyl-L-methionine (Cx-SAM). The polypeptide is Carboxy-S-adenosyl-L-methionine synthase (Sodalis glossinidius (strain morsitans)).